A 423-amino-acid polypeptide reads, in one-letter code: Gamma-glutamyl phosphate reductase (423 aa).

This sequence belongs to the gamma-glutamyl phosphate reductase family.

Its subcellular location is the cytoplasm. The enzyme catalyses L-glutamate 5-semialdehyde + phosphate + NADP(+) = L-glutamyl 5-phosphate + NADPH + H(+). It participates in amino-acid biosynthesis; L-proline biosynthesis; L-glutamate 5-semialdehyde from L-glutamate: step 2/2. Its function is as follows. Catalyzes the NADPH-dependent reduction of L-glutamate 5-phosphate into L-glutamate 5-semialdehyde and phosphate. The product spontaneously undergoes cyclization to form 1-pyrroline-5-carboxylate. This Paraburkholderia phytofirmans (strain DSM 17436 / LMG 22146 / PsJN) (Burkholderia phytofirmans) protein is Gamma-glutamyl phosphate reductase.